The primary structure comprises 495 residues: Heat stress transcription factor A-1a (495 aa).

A DNA-binding region spans residues 50–144 (PPPFLSKTYD…LLKKISRRKS (95 aa)). Positions 140–164 (SRRKSVQGHGSSSSNPQSQQLSQGQ) are disordered. Residues 146-164 (QGHGSSSSNPQSQQLSQGQ) show a composition bias toward low complexity. Residues 172–238 (SCVEVGKFGL…QIMSFLAKAV (67 aa)) form a hydrophobic repeat HR-A/B region. A disordered region spans residues 255-288 (NMHVTEANKKRRLREDSTAATESNSHSHSLEASD). A Nuclear localization signal motif is present at residues 262–268 (NKKRRLR). Polar residues predominate over residues 272–281 (TAATESNSHS). Residues 433-442 (FEFLEEYMPE) carry the AHA motif. The tract at residues 445 to 477 (VFGDATTLENNNNNNNNNNNNNNNNNNNNTNGR) is disordered. The segment covering 454–473 (NNNNNNNNNNNNNNNNNNNN) has biased composition (low complexity). A Nuclear export signal motif is present at residues 482-489 (LIEELGLL).

The protein belongs to the HSF family. Class A subfamily. Homotrimer. Interacts with HSP70-1 and HSP70-4. Binds to CRK1. Binds to HSBP. Post-translationally, exhibits temperature-dependent phosphorylation. Phosphorylated by CRK1. In terms of tissue distribution, constitutively expressed.

Its subcellular location is the cytoplasm. The protein resides in the nucleus. Its function is as follows. Transcriptional activator that specifically binds DNA sequence 5'-AGAAnnTTCT-3' known as heat shock promoter elements (HSE). In Arabidopsis thaliana (Mouse-ear cress), this protein is Heat stress transcription factor A-1a (HSFA1A).